An 82-amino-acid polypeptide reads, in one-letter code: Putative membrane protein insertion efficiency factor (82 aa).

The protein belongs to the UPF0161 family.

The protein resides in the cell inner membrane. Functionally, could be involved in insertion of integral membrane proteins into the membrane. This is Putative membrane protein insertion efficiency factor from Rickettsia africae (strain ESF-5).